The chain runs to 1345 residues: DNA-directed RNA polymerase subunit beta (1345 aa).

It belongs to the RNA polymerase beta chain family. As to quaternary structure, the RNAP catalytic core consists of 2 alpha, 1 beta, 1 beta' and 1 omega subunit. When a sigma factor is associated with the core the holoenzyme is formed, which can initiate transcription.

It carries out the reaction RNA(n) + a ribonucleoside 5'-triphosphate = RNA(n+1) + diphosphate. Functionally, DNA-dependent RNA polymerase catalyzes the transcription of DNA into RNA using the four ribonucleoside triphosphates as substrates. The chain is DNA-directed RNA polymerase subunit beta from Shewanella sp. (strain MR-4).